The primary structure comprises 342 residues: 4-hydroxythreonine-4-phosphate dehydrogenase (342 aa).

Residues His139 and Thr140 each contribute to the substrate site. Residues His174, His219, and His274 each contribute to the a divalent metal cation site. Residues Lys282, Asn291, and Arg300 each coordinate substrate.

This sequence belongs to the PdxA family. In terms of assembly, homodimer. Zn(2+) is required as a cofactor. Requires Mg(2+) as cofactor. The cofactor is Co(2+).

The protein localises to the cytoplasm. The enzyme catalyses 4-(phosphooxy)-L-threonine + NAD(+) = 3-amino-2-oxopropyl phosphate + CO2 + NADH. Its pathway is cofactor biosynthesis; pyridoxine 5'-phosphate biosynthesis; pyridoxine 5'-phosphate from D-erythrose 4-phosphate: step 4/5. Its function is as follows. Catalyzes the NAD(P)-dependent oxidation of 4-(phosphooxy)-L-threonine (HTP) into 2-amino-3-oxo-4-(phosphooxy)butyric acid which spontaneously decarboxylates to form 3-amino-2-oxopropyl phosphate (AHAP). The polypeptide is 4-hydroxythreonine-4-phosphate dehydrogenase (Mesorhizobium japonicum (strain LMG 29417 / CECT 9101 / MAFF 303099) (Mesorhizobium loti (strain MAFF 303099))).